Consider the following 353-residue polypeptide: Ion-translocating oxidoreductase complex subunit D (353 aa).

The next 4 helical transmembrane spans lie at 20-40 (IMLL…YYFG), 44-64 (IIQV…ILHL), 77-108 (SALL…AIII), and 123-143 (PAMV…TSWL). At Thr187 the chain carries FMN phosphoryl threonine. Transmembrane regions (helical) follow at residues 214 to 234 (VIAG…GVFL), 242 to 262 (WHIP…GWLL), 267 to 287 (LVTP…FFIA), and 301 to 318 (LLYG…RSYG).

It belongs to the NqrB/RnfD family. The complex is composed of six subunits: RnfA, RnfB, RnfC, RnfD, RnfE and RnfG. It depends on FMN as a cofactor.

Its subcellular location is the cell inner membrane. Its function is as follows. Part of a membrane-bound complex that couples electron transfer with translocation of ions across the membrane. The polypeptide is Ion-translocating oxidoreductase complex subunit D (Erwinia tasmaniensis (strain DSM 17950 / CFBP 7177 / CIP 109463 / NCPPB 4357 / Et1/99)).